The following is a 495-amino-acid chain: MAGKVRSLLPPLLLAAAGLAGLLLLCVPTRDVREPPALKYGIVLDAGSSHTSMFIYKWPADKENDTGIVGQHSSCDVPGGGISSYADNPSGASQSLVGCLEQALQDVPKERHAGTPLYLGATAGMRLLNLTNPEASTSVLMAVTHTLTQYPFDFRGARILSGQEEGVFGWVTANYLLENFIKYGWVGRWFRPRKGTLGAMDLGGASTQITFETTSPAEDRASEVQLHLYGQHYRVYTHSFLCYGRDQVLQRLLASALQTHGFHPCWPRGFSTQVLLGDVYQSPCTMAQRPQNFNSSARVSLSGSSDPHLCRDLVSGLFSFSSCPFSRCSFNGVFQPPVAGNFVAFSAFFYTVDFLRTSMGLPVATLQQLEAAAVNVCNQTWAQLQARVPGQRARLADYCAGAMFVQQLLSRGYGFDERAFGGVIFQKKAADTAVGWALGYMLNLTNLIPADPPGLRKGTDFSSWVVLLLLFASALLAALVLLLRQVHSAKLPSTI.

Residues 1–7 (MAGKVRS) lie on the Cytoplasmic side of the membrane. A helical membrane pass occupies residues 8–28 (LLPPLLLAAAGLAGLLLLCVP). At 29-462 (TRDVREPPAL…PGLRKGTDFS (434 aa)) the chain is on the extracellular side. Asn-64 is a glycosylation site (N-linked (GlcNAc...) asparagine). The cysteines at positions 75 and 99 are disulfide-linked. An N-linked (GlcNAc...) asparagine glycan is attached at Asn-129. Glu-165 serves as the catalytic Proton acceptor. ATP is bound at residue 204–208 (GASTQ). 4 cysteine pairs are disulfide-bonded: Cys-242–Cys-284, Cys-265–Cys-310, Cys-323–Cys-328, and Cys-377–Cys-399. N-linked (GlcNAc...) asparagine glycosylation is present at Asn-294. Asn-378 and Asn-443 each carry an N-linked (GlcNAc...) asparagine glycan. The helical transmembrane segment at 463 to 483 (SWVVLLLLFASALLAALVLLL) threads the bilayer. Topologically, residues 484-495 (RQVHSAKLPSTI) are cytoplasmic.

This sequence belongs to the GDA1/CD39 NTPase family. Requires Ca(2+) as cofactor. Mg(2+) serves as cofactor. As to expression, brain, placenta, skeletal muscle, kidney, pancreas, heart, ovary, testis, colon, small intestine, prostate and pancreas. No expression in adult thymus, spleen, lung, liver and peripheral blood leukocytes.

The protein localises to the cell membrane. Its subcellular location is the endoplasmic reticulum membrane. Its function is as follows. In the nervous system, could hydrolyze ATP and other nucleotides to regulate purinergic neurotransmission. Hydrolyzes ADP only to a marginal extent. The order of activity with different substrates is ATP &gt; GTP &gt; CTP = ITP &gt; UTP &gt;&gt; ADP = UDP. This Homo sapiens (Human) protein is Ectonucleoside triphosphate diphosphohydrolase 2 (ENTPD2).